The primary structure comprises 243 residues: Large ribosomal subunit protein uL2 (243 aa).

Residues 198–243 (VDHPFGGGGRQHPGKPKSVSRDTPPGRKVGDIASKRTGRGGKGGQE) are disordered. The segment covering 221–231 (PPGRKVGDIAS) has biased composition (basic and acidic residues).

Belongs to the universal ribosomal protein uL2 family. As to quaternary structure, part of the 50S ribosomal subunit. Forms a bridge to the 30S subunit in the 70S ribosome.

In terms of biological role, one of the primary rRNA binding proteins. Required for association of the 30S and 50S subunits to form the 70S ribosome, for tRNA binding and peptide bond formation. It has been suggested to have peptidyltransferase activity; this is somewhat controversial. Makes several contacts with the 16S rRNA in the 70S ribosome. This is Large ribosomal subunit protein uL2 from Natronomonas pharaonis (strain ATCC 35678 / DSM 2160 / CIP 103997 / JCM 8858 / NBRC 14720 / NCIMB 2260 / Gabara) (Halobacterium pharaonis).